A 109-amino-acid polypeptide reads, in one-letter code: Spermidine export protein MdtI (109 aa).

The next 4 membrane-spanning stretches (helical) occupy residues 6 to 26, 36 to 56, 64 to 84, and 88 to 108; these read WVHAAWLAMAIVLEIVANVFL, FYGILSLAAVLAAFSALSQAV, AYALWGGFGIAATLAAGWVLF, and LNNKGWVGVVLLLIGMIMIKL.

It belongs to the drug/metabolite transporter (DMT) superfamily. Small multidrug resistance (SMR) (TC 2.A.7.1) family. MdtI subfamily. As to quaternary structure, forms a complex with MdtJ.

It localises to the cell inner membrane. Functionally, catalyzes the excretion of spermidine. The polypeptide is Spermidine export protein MdtI (Citrobacter koseri (strain ATCC BAA-895 / CDC 4225-83 / SGSC4696)).